We begin with the raw amino-acid sequence, 285 residues long: Alpha-acetolactate decarboxylase (285 aa).

Positions 1 to 25 are cleaved as a signal peptide; sequence MKKNIITSITSLALVAGLSLTAFAA.

This sequence belongs to the alpha-acetolactate decarboxylase family.

The catalysed reaction is (2S)-2-acetolactate + H(+) = (R)-acetoin + CO2. The protein operates within polyol metabolism; (R,R)-butane-2,3-diol biosynthesis; (R,R)-butane-2,3-diol from pyruvate: step 2/3. Its function is as follows. Converts acetolactate into acetoin, which can be excreted by the cells. This may be a mechanism for controlling the internal pH of cells in the stationary stage. The polypeptide is Alpha-acetolactate decarboxylase (aldB) (Brevibacillus brevis (Bacillus brevis)).